The chain runs to 266 residues: MKLSLSPPPYADAPVVVLISGLGGSGSYWLPQLAVLEQEYQVVCYDQRGTGNNPDTLAEDYSITQMAAELHQALVAAGIEHYAVVGHALGALVGMQLALDHPASVTVLVCVNGWLRINAHTRRCFQVRERLLYSGGAQAWVEAQPLFLYPADWMAARAPRLEAEDALALAHFQGKNNLLRRLNALKRADFSHHADRIRCPVQIICASDDLLVPSACSSELHAALPDSQKMVMRYGGHACNVTDPETFNALLLNGLASLLHHREAAL.

Belongs to the AB hydrolase superfamily. Hydrolase RutD family.

It catalyses the reaction carbamate + 2 H(+) = NH4(+) + CO2. Functionally, involved in pyrimidine catabolism. May facilitate the hydrolysis of carbamate, a reaction that can also occur spontaneously. In Escherichia coli O157:H7, this protein is Putative carbamate hydrolase RutD.